Reading from the N-terminus, the 472-residue chain is Siroheme synthase (472 aa).

The tract at residues 1–204 (MDYLPIFTKL…GQTEKAIALM (204 aa)) is precorrin-2 dehydrogenase /sirohydrochlorin ferrochelatase. Residues 22-23 (SI) and 43-44 (LE) contribute to the NAD(+) site. Serine 128 is subject to Phosphoserine. Positions 215–472 (GDVALVGAGP…SRDPFLVNLA (258 aa)) are uroporphyrinogen-III C-methyltransferase. S-adenosyl-L-methionine is bound at residue proline 224. Aspartate 247 serves as the catalytic Proton acceptor. Catalysis depends on lysine 269, which acts as the Proton donor. S-adenosyl-L-methionine contacts are provided by residues 300–302 (GGD), isoleucine 305, 330–331 (TA), methionine 382, and glycine 411.

It in the N-terminal section; belongs to the precorrin-2 dehydrogenase / sirohydrochlorin ferrochelatase family. The protein in the C-terminal section; belongs to the precorrin methyltransferase family.

It catalyses the reaction uroporphyrinogen III + 2 S-adenosyl-L-methionine = precorrin-2 + 2 S-adenosyl-L-homocysteine + H(+). The catalysed reaction is precorrin-2 + NAD(+) = sirohydrochlorin + NADH + 2 H(+). It carries out the reaction siroheme + 2 H(+) = sirohydrochlorin + Fe(2+). It participates in cofactor biosynthesis; adenosylcobalamin biosynthesis; precorrin-2 from uroporphyrinogen III: step 1/1. It functions in the pathway cofactor biosynthesis; adenosylcobalamin biosynthesis; sirohydrochlorin from precorrin-2: step 1/1. Its pathway is porphyrin-containing compound metabolism; siroheme biosynthesis; precorrin-2 from uroporphyrinogen III: step 1/1. The protein operates within porphyrin-containing compound metabolism; siroheme biosynthesis; siroheme from sirohydrochlorin: step 1/1. It participates in porphyrin-containing compound metabolism; siroheme biosynthesis; sirohydrochlorin from precorrin-2: step 1/1. Multifunctional enzyme that catalyzes the SAM-dependent methylations of uroporphyrinogen III at position C-2 and C-7 to form precorrin-2 via precorrin-1. Then it catalyzes the NAD-dependent ring dehydrogenation of precorrin-2 to yield sirohydrochlorin. Finally, it catalyzes the ferrochelation of sirohydrochlorin to yield siroheme. The polypeptide is Siroheme synthase (Psychromonas ingrahamii (strain DSM 17664 / CCUG 51855 / 37)).